The following is a 1365-amino-acid chain: Serine-aspartate repeat-containing protein D (1365 aa).

Positions 1-35 (MLNRENKTAITRKGMVSNRLNKFSIRKYTVGTASI) are cleaved as a signal peptide. A YSIRK-G/S signaling motif motif is present at residues 23–34 (FSIRKYTVGTAS). The segment at 36–568 (LVGTTLIFGL…NNQSGGAGQE (533 aa)) is ligand binding A region. Residues 54–185 (ESTNKELNEA…NKKVDAKTES (132 aa)) are disordered. Polar residues-rich tracts occupy residues 62 to 71 (EATTSASDNQ) and 94 to 109 (EMVS…NGNK). Over residues 130 to 145 (KSDEQASPKSTNEDLN) the composition is skewed to basic and acidic residues. 2 stretches are compositionally biased toward polar residues: residues 146 to 155 (TKQTISNQEA) and 163 to 173 (NKSVVNAQPTN). The segment covering 174 to 183 (EENKKVDAKT) has biased composition (basic and acidic residues). 5 consecutive CNA-B domains span residues 569-680 (VYKI…IYKP), 681-791 (KYNL…YKTP), 792-901 (KYNL…FYKP), 902-1012 (TYNL…YKTP), and 1013-1123 (KYSL…EEDT). Disordered regions lie at residues 857-884 (ETPS…STTG), 972-991 (YTPT…NGLT), and 1078-1341 (EKPA…SNNA). 2 stretches are compositionally biased toward polar residues: residues 860–869 (SGYTPTQVGS) and 972–981 (YTPTSVTSGN). Acidic residues-rich tracts occupy residues 1091-1101 (TEDDKDADGGE) and 1118-1304 (YFEE…DSDS). The LPXTG sorting signal motif lies at 1328–1332 (LPETG). Residue T1331 is modified to Pentaglycyl murein peptidoglycan amidated threonine. Positions 1332-1365 (GNENSGSNNATLFGGLFAALGSLLLFGRRKKQNK) are cleaved as a propeptide — removed by sortase.

It belongs to the serine-aspartate repeat-containing protein (SDr) family. As to quaternary structure, interacts with host DSG1; this interaction increases S.aureus adherence to keratinocytes.

It is found in the secreted. Its subcellular location is the cell wall. Functionally, cell surface-associated calcium-binding protein which plays an important role in adhesion and pathogenesis. Mediates interactions with components of the extracellular matrix such as host DSG1 to promote bacterial adhesion to host cells. Contributes to the resistance to killing by innate immune components such as neutrophils present in blood and thus attenuates bacterial clearance. In Staphylococcus aureus (strain MSSA476), this protein is Serine-aspartate repeat-containing protein D (sdrD).